Here is a 129-residue protein sequence, read N- to C-terminus: Protein NrdI (129 aa).

It belongs to the NrdI family.

In terms of biological role, probably involved in ribonucleotide reductase function. This is Protein NrdI from Macrococcus caseolyticus (strain JCSC5402) (Macrococcoides caseolyticum).